The sequence spans 267 residues: Myb-related protein Hv1 (267 aa).

2 consecutive HTH myb-type domains span residues 9 to 61 and 62 to 116; these read KAHT…INYL and RPDL…RRKL. 2 DNA-binding regions (H-T-H motif) span residues 37 to 61 and 89 to 112; these read WRSL…INYL and WSLI…NTHI.

In terms of tissue distribution, germinating seed and apical meristem of shoot and root.

It localises to the nucleus. Functionally, possible transcription activator in response to an external signal. May be involved in the regulation of flavonoid biosynthesis. This is Myb-related protein Hv1 (MYB1) from Hordeum vulgare (Barley).